The sequence spans 119 residues: Tubulin-specific chaperone A (119 aa).

This sequence belongs to the TBCA family. Supercomplex made of cofactors A to E. Cofactors A and D function by capturing and stabilizing tubulin in a quasi-native conformation. Cofactor E binds to the cofactor D-tubulin complex; interaction with cofactor C then causes the release of tubulin polypeptides that are committed to the native state.

It is found in the cytoplasm. It localises to the cytoskeleton. Functionally, required for the maintenance of microtubule structures and cell polarity. Beta-tubulin-folding protein; may have a regulatory role in the tubulin-folding pathway. In Schizosaccharomyces pombe (strain 972 / ATCC 24843) (Fission yeast), this protein is Tubulin-specific chaperone A (alp31).